Reading from the N-terminus, the 276-residue chain is uncharacterized protein (276 aa).

Residues 20–137 form the AB hydrolase-1 domain; that stretch reads PVLIFIPGAN…PPINTFLPDS (118 aa). The disordered stretch occupies residues 57-76; sequence GESELTEPLPDSASNPDSDY.

This sequence belongs to the AB hydrolase superfamily.

This is an uncharacterized protein from Staphylococcus aureus (strain bovine RF122 / ET3-1).